The chain runs to 336 residues: tRNA (guanine(10)-N2)-dimethyltransferase (336 aa).

One can recognise a THUMP domain in the interval 50-147 (KILKKRLAYA…NDRFILTRRL (98 aa)).

It belongs to the methyltransferase superfamily. Trm-G10 family. In terms of assembly, monomer.

It is found in the cytoplasm. It carries out the reaction guanosine(10) in tRNA + 2 S-adenosyl-L-methionine = N(2)-dimethylguanosine(10) in tRNA + 2 S-adenosyl-L-homocysteine + 2 H(+). Functionally, catalyzes the adenosylmethionine-dependent methylation of the exocyclic amino group (N(2)) of guanosine at position 10 of various tRNAs. Acts via a two-step process that leads to the formation of either N(2)-monomethyl (m(2)G) or N(2)-dimethylguanosine (m(2)(2)G). The polypeptide is tRNA (guanine(10)-N2)-dimethyltransferase (trmG10) (Methanothermobacter thermautotrophicus (strain ATCC 29096 / DSM 1053 / JCM 10044 / NBRC 100330 / Delta H) (Methanobacterium thermoautotrophicum)).